Consider the following 512-residue polypeptide: Maturase K (512 aa).

This sequence belongs to the intron maturase 2 family. MatK subfamily.

The protein resides in the plastid. It localises to the chloroplast. Its function is as follows. Usually encoded in the trnK tRNA gene intron. Probably assists in splicing its own and other chloroplast group II introns. This is Maturase K from Dalea wrightii (Wright's prairie clover).